The following is a 185-amino-acid chain: F-box protein At1g61340 (185 aa).

The region spanning 78 to 126 (SRELEDLPLDILVRIICGVEHEDLKQLFHVSKTIREATMIAKQSHFAYS) is the F-box domain.

The chain is F-box protein At1g61340 from Arabidopsis thaliana (Mouse-ear cress).